The sequence spans 539 residues: Kynureninase 2 (539 aa).

Residues 60 to 87 form a disordered region; that stretch reads DGGVAGETKEPRVPNGVSSATKPNGTVN. The segment covering 75-87 has biased composition (polar residues); that stretch reads GVSSATKPNGTVN. Pyridoxal 5'-phosphate contacts are provided by residues Leu171, Thr172, 199 to 202, Asp290, His293, and Tyr315; that span reads FPSD. Residue Lys316 is modified to N6-(pyridoxal phosphate)lysine. Gly residues predominate over residues 340-352; it reads GGGGSGGVGGGRG. Residues 340–363 are disordered; that stretch reads GGGGSGGVGGGRGEGGDGDGGDGG. Residues Trp379 and Asn407 each coordinate pyridoxal 5'-phosphate.

This sequence belongs to the kynureninase family. As to quaternary structure, homodimer. Pyridoxal 5'-phosphate is required as a cofactor.

The protein localises to the cytoplasm. The catalysed reaction is L-kynurenine + H2O = anthranilate + L-alanine + H(+). The enzyme catalyses 3-hydroxy-L-kynurenine + H2O = 3-hydroxyanthranilate + L-alanine + H(+). The protein operates within amino-acid degradation; L-kynurenine degradation; L-alanine and anthranilate from L-kynurenine: step 1/1. It participates in cofactor biosynthesis; NAD(+) biosynthesis; quinolinate from L-kynurenine: step 2/3. Catalyzes the cleavage of L-kynurenine (L-Kyn) and L-3-hydroxykynurenine (L-3OHKyn) into anthranilic acid (AA) and 3-hydroxyanthranilic acid (3-OHAA), respectively. This is Kynureninase 2 from Chaetomium globosum (strain ATCC 6205 / CBS 148.51 / DSM 1962 / NBRC 6347 / NRRL 1970) (Soil fungus).